A 75-amino-acid chain; its full sequence is RNA-binding protein KhpA (75 aa).

The KH domain occupies 29 to 75 (KVVYHLTVHPDDVGKVIGKNGRIAKAIRTVVYASKTDGNKRIYLDIM).

The protein belongs to the KhpA RNA-binding protein family. As to quaternary structure, forms a complex with KhpB.

The protein resides in the cytoplasm. Its function is as follows. A probable RNA chaperone. Forms a complex with KhpB which binds to cellular RNA and controls its expression. Plays a role in peptidoglycan (PG) homeostasis and cell length regulation. The chain is RNA-binding protein KhpA from Oceanobacillus iheyensis (strain DSM 14371 / CIP 107618 / JCM 11309 / KCTC 3954 / HTE831).